A 197-amino-acid polypeptide reads, in one-letter code: Holliday junction branch migration complex subunit RuvA (197 aa).

Positions 1–63 (MIEFIRGYVD…EDVLALYGFH (63 aa)) are domain I. The domain II stretch occupies residues 64-142 (TRQERMLFAK…AIVPDAFPNL (79 aa)). The segment at 143–149 (FTEPLEE) is flexible linker. A domain III region spans residues 149–197 (ETNALSEAIEALKALGYADKEIQKVVPMLRQERLSTEGYIKLALQKLLK).

This sequence belongs to the RuvA family. In terms of assembly, homotetramer. Forms an RuvA(8)-RuvB(12)-Holliday junction (HJ) complex. HJ DNA is sandwiched between 2 RuvA tetramers; dsDNA enters through RuvA and exits via RuvB. An RuvB hexamer assembles on each DNA strand where it exits the tetramer. Each RuvB hexamer is contacted by two RuvA subunits (via domain III) on 2 adjacent RuvB subunits; this complex drives branch migration. In the full resolvosome a probable DNA-RuvA(4)-RuvB(12)-RuvC(2) complex forms which resolves the HJ.

The protein resides in the cytoplasm. The RuvA-RuvB-RuvC complex processes Holliday junction (HJ) DNA during genetic recombination and DNA repair, while the RuvA-RuvB complex plays an important role in the rescue of blocked DNA replication forks via replication fork reversal (RFR). RuvA specifically binds to HJ cruciform DNA, conferring on it an open structure. The RuvB hexamer acts as an ATP-dependent pump, pulling dsDNA into and through the RuvAB complex. HJ branch migration allows RuvC to scan DNA until it finds its consensus sequence, where it cleaves and resolves the cruciform DNA. The sequence is that of Holliday junction branch migration complex subunit RuvA from Anoxybacillus flavithermus (strain DSM 21510 / WK1).